A 134-amino-acid polypeptide reads, in one-letter code: Alkaline proteinase inhibitor (134 aa).

A signal peptide spans 1–26; sequence MVFAAWYLKFAGFVALIFSIIGGSMA. Cysteine 50 and cysteine 73 are oxidised to a cystine.

The protein belongs to the protease inhibitor I38 family.

The protein localises to the periplasm. Its function is as follows. Inhibitor of the alkaline protease. This chain is Alkaline proteinase inhibitor (inh), found in Photorhabdus laumondii subsp. laumondii (strain DSM 15139 / CIP 105565 / TT01) (Photorhabdus luminescens subsp. laumondii).